Here is a 114-residue protein sequence, read N- to C-terminus: Fumarate reductase subunit D (114 aa).

The next 3 membrane-spanning stretches (helical) occupy residues 24 to 44, 50 to 70, and 92 to 112; these read VSAI…PFGL, LITF…TIFP, and GGFI…FAVI.

Belongs to the FrdD family. As to quaternary structure, part of an enzyme complex containing four subunits: a flavoprotein (FrdA), an iron-sulfur protein (FrdB), and two hydrophobic anchor proteins (FrdC and FrdD).

It is found in the cell inner membrane. Anchors the catalytic components of the fumarate reductase complex to the cell membrane, binds quinones. The polypeptide is Fumarate reductase subunit D (Haemophilus influenzae (strain 86-028NP)).